The primary structure comprises 144 residues: Maximins 4/H3 type 3 (144 aa).

Residues 1 to 18 form the signal peptide; sequence MNFKYIIAVSFFIASAYA. Positions 19-43 are excised as a propeptide; sequence RTEEKDVQSLSQRDVLEEESLREIR. Asn-70 carries the post-translational modification Asparagine amide. The propeptide occupies 74–123; it reads TAEDHEVMKRLEAVMRDLDSLDHPEEASERQTRGFNQEEIANLFTKKEKR. Ile-143 bears the Isoleucine amide mark.

The protein belongs to the bombinin family. Expressed by the skin glands.

It localises to the secreted. Its function is as follows. Maximin-4 shows antibacterial activity against both Gram-positive and Gram-negative bacteria. It also shows antimicrobial activity against the fungus C.albicans, but not against A.flavus nor P.uticale. It has little hemolytic activity. It does not possess a significant cytotoxicity against tumor cell lines. It does not possess a significant anti-HIV activity. Functionally, maximin-H3 shows antibacterial activity against both Gram-positive and Gram-negative bacteria. It also shows antimicrobial activity against the fungus C.albicans. Shows strong hemolytic activity. The sequence is that of Maximins 4/H3 type 3 from Bombina maxima (Giant fire-bellied toad).